The primary structure comprises 246 residues: Transcription factor A, mitochondrial (246 aa).

A mitochondrion-targeting transit peptide spans 1-42 (MAFLRSMWGVLSALGRSGAAVCIGCGSRLRSPFSFVYLPKCF). The HMG box 1 DNA-binding region spans 50–118 (PKKPVSSYLR…VYKEKISRFK (69 aa)). Serine 55, serine 56, and serine 61 each carry phosphoserine; by PKA. At threonine 122 the chain carries Phosphothreonine. A DNA-binding region (HMG box 2) is located at residues 155–219 (PKRPRSAYNV…RYHNEMKSWE (65 aa)). Serine 160 bears the Phosphoserine; by PKA mark. Residues serine 193 and serine 195 each carry the phosphoserine modification.

In terms of assembly, monomer; binds DNA as a monomer. Homodimer. Component of the mitochondrial transcription initiation complex, composed at least of TFB2M, TFAM and POLRMT. In this complex TFAM recruits POLRMT to the promoter whereas TFB2M induces structural changes in POLRMT to enable promoter opening and trapping of the DNA non-template strand. Upon metabolic stress, forms a complex composed of FOXO3, SIRT3, TFAM and POLRMT. Interacts with TFB1M and TFB2M. Interacts with CLPX; this enhances DNA-binding. In terms of processing, phosphorylation by PKA within the HMG box 1 impairs DNA binding and promotes degradation by the AAA+ Lon protease.

The protein localises to the mitochondrion. It is found in the mitochondrion matrix. It localises to the mitochondrion nucleoid. In terms of biological role, binds to the mitochondrial light strand promoter and functions in mitochondrial transcription regulation. Component of the mitochondrial transcription initiation complex, composed at least of TFB2M, TFAM and POLRMT that is required for basal transcription of mitochondrial DNA. In this complex, TFAM recruits POLRMT to a specific promoter whereas TFB2M induces structural changes in POLRMT to enable promoter opening and trapping of the DNA non-template strand. Required for accurate and efficient promoter recognition by the mitochondrial RNA polymerase. Promotes transcription initiation from the HSP1 and the light strand promoter by binding immediately upstream of transcriptional start sites. Is able to unwind DNA. Bends the mitochondrial light strand promoter DNA into a U-turn shape via its HMG boxes. Required for maintenance of normal levels of mitochondrial DNA. May play a role in organizing and compacting mitochondrial DNA. The protein is Transcription factor A, mitochondrial of Trachypithecus cristatus (Silvered leaf-monkey).